A 215-amino-acid chain; its full sequence is Phosphatidylserine decarboxylase proenzyme (215 aa).

The active-site Schiff-base intermediate with substrate; via pyruvic acid is Ser-181. Residue Ser-181 is modified to Pyruvic acid (Ser); by autocatalysis.

Belongs to the phosphatidylserine decarboxylase family. PSD-A subfamily. As to quaternary structure, heterodimer of a large membrane-associated beta subunit and a small pyruvoyl-containing alpha subunit. Requires pyruvate as cofactor. Post-translationally, is synthesized initially as an inactive proenzyme. Formation of the active enzyme involves a self-maturation process in which the active site pyruvoyl group is generated from an internal serine residue via an autocatalytic post-translational modification. Two non-identical subunits are generated from the proenzyme in this reaction, and the pyruvate is formed at the N-terminus of the alpha chain, which is derived from the carboxyl end of the proenzyme. The post-translation cleavage follows an unusual pathway, termed non-hydrolytic serinolysis, in which the side chain hydroxyl group of the serine supplies its oxygen atom to form the C-terminus of the beta chain, while the remainder of the serine residue undergoes an oxidative deamination to produce ammonia and the pyruvoyl prosthetic group on the alpha chain.

The protein localises to the cell membrane. It carries out the reaction a 1,2-diacyl-sn-glycero-3-phospho-L-serine + H(+) = a 1,2-diacyl-sn-glycero-3-phosphoethanolamine + CO2. The protein operates within phospholipid metabolism; phosphatidylethanolamine biosynthesis; phosphatidylethanolamine from CDP-diacylglycerol: step 2/2. Functionally, catalyzes the formation of phosphatidylethanolamine (PtdEtn) from phosphatidylserine (PtdSer). The protein is Phosphatidylserine decarboxylase proenzyme of Polynucleobacter asymbioticus (strain DSM 18221 / CIP 109841 / QLW-P1DMWA-1) (Polynucleobacter necessarius subsp. asymbioticus).